The following is a 310-amino-acid chain: MSENRIRIATRKSPLAMWQAEFVKAELERIHPGIVVELLPMSTKGDVILDTPLAKVGGKGLFVKELEVAMLEDQADIAVHSMKDVPVDFPEGLGLEVICEREDPRDAFVSNIYKSISELPLGATVGTSSLRRQCQLRASRPDLIIKDLRGNVGTRLAKLDNGEYDAIILAAAGLIRLKLSERIASFISAEESLPANGQGAVGIECRTNDERVKALLAPLEHLETRYRVIAERAMNTRLEGGCQVPIGAFAEIDGDEMTLRGLVGNPDGSEIIEGVITGPKTEATQLGVALAEELLSKGAKSILDAVYAKA.

Cys242 bears the S-(dipyrrolylmethanemethyl)cysteine mark.

This sequence belongs to the HMBS family. Monomer. Dipyrromethane serves as cofactor.

It catalyses the reaction 4 porphobilinogen + H2O = hydroxymethylbilane + 4 NH4(+). It functions in the pathway porphyrin-containing compound metabolism; protoporphyrin-IX biosynthesis; coproporphyrinogen-III from 5-aminolevulinate: step 2/4. Tetrapolymerization of the monopyrrole PBG into the hydroxymethylbilane pre-uroporphyrinogen in several discrete steps. The sequence is that of Porphobilinogen deaminase from Shewanella oneidensis (strain ATCC 700550 / JCM 31522 / CIP 106686 / LMG 19005 / NCIMB 14063 / MR-1).